A 237-amino-acid polypeptide reads, in one-letter code: tRNA (guanine-N(1)-)-methyltransferase (237 aa).

Residues Gly113 and 133–138 (MGDYIL) contribute to the S-adenosyl-L-methionine site.

It belongs to the RNA methyltransferase TrmD family. In terms of assembly, homodimer.

The protein resides in the cytoplasm. It carries out the reaction guanosine(37) in tRNA + S-adenosyl-L-methionine = N(1)-methylguanosine(37) in tRNA + S-adenosyl-L-homocysteine + H(+). Specifically methylates guanosine-37 in various tRNAs. In Wolinella succinogenes (strain ATCC 29543 / DSM 1740 / CCUG 13145 / JCM 31913 / LMG 7466 / NCTC 11488 / FDC 602W) (Vibrio succinogenes), this protein is tRNA (guanine-N(1)-)-methyltransferase.